Here is a 172-residue protein sequence, read N- to C-terminus: 3-phenylpropionate/cinnamic acid dioxygenase subunit beta (172 aa).

This sequence belongs to the bacterial ring-hydroxylating dioxygenase beta subunit family. This dioxygenase system consists of four proteins: the two subunits of the hydroxylase component (HcaE and HcaF), a ferredoxin (HcaC) and a ferredoxin reductase (HcaD).

It catalyses the reaction 3-phenylpropanoate + NADH + O2 + H(+) = 3-(cis-5,6-dihydroxycyclohexa-1,3-dien-1-yl)propanoate + NAD(+). The catalysed reaction is (E)-cinnamate + NADH + O2 + H(+) = (2E)-3-(cis-5,6-dihydroxycyclohexa-1,3-dien-1-yl)prop-2-enoate + NAD(+). It participates in aromatic compound metabolism; 3-phenylpropanoate degradation. Its function is as follows. Part of the multicomponent 3-phenylpropionate dioxygenase. Converts 3-phenylpropionic acid (PP) and cinnamic acid (CI) into 3-phenylpropionate-dihydrodiol (PP-dihydrodiol) and cinnamic acid-dihydrodiol (CI-dihydrodiol), respectively. The sequence is that of 3-phenylpropionate/cinnamic acid dioxygenase subunit beta from Escherichia coli O139:H28 (strain E24377A / ETEC).